The following is a 488-amino-acid chain: Germacrene A hydroxylase (488 aa).

Over methionine 1 to threonine 6 the chain is Cytoplasmic. A helical; Signal-anchor for type II membrane protein membrane pass occupies residues threonine 7–threonine 23. The Lumenal segment spans residues arginine 24 to phenylalanine 488. Residues asparagine 260 and asparagine 379 are each glycosylated (N-linked (GlcNAc...) asparagine). Residue cysteine 432 coordinates heme.

Belongs to the cytochrome P450 family. Heme is required as a cofactor.

Its subcellular location is the endoplasmic reticulum membrane. The protein resides in the microsome membrane. The catalysed reaction is (+)-(R)-germacrene A + 3 reduced [NADPH--hemoprotein reductase] + 3 O2 = germacra-1(10),4,11(13)-trien-12-oate + 3 oxidized [NADPH--hemoprotein reductase] + 4 H2O + 4 H(+). It participates in secondary metabolite biosynthesis; terpenoid biosynthesis. With respect to regulation, inhibited by cytochrome C, miconazole, aminobenzotriazole, metyrapone and clotrimazole. In terms of biological role, involved in the biosynthesis of germacrene-derived sesquiterpene lactones. Catalyzes three consecutive oxidations of germacrene A to produce germacrene A acid. Could also catalyze the three-step oxidation of non-natural substrate amorphadiene to artemisinic acid. Can use beta-elemene as substrate. This chain is Germacrene A hydroxylase, found in Cichorium intybus (Chicory).